The primary structure comprises 526 residues: MTAFNDRLGALSDAEGRKALAGLRRGLEREALRITSCCQLALDPHPKALGSALTHSRITTDYSEALLEFITPVSGNIEDLLEGLTETHAYTLKHLDGQKLWPVSMPCYVGDVKDIPIAQYGTSNTGRMKTLYRKGLTYRYGALMQIISGVHFNFSLSSDLWPRLHALSGSSLSLDEFISESYFGLIRNYRRLVWVLPYLFGASPAICGSFLKGQKTSLEFEKTAGGTLYLPYATSLRMSDLGYTNKEQASLNISYDSLHDYLQGIREAICLPSAKFAEIGVKVDGEYRQLNANVLQIENEFYAPIRAKRVTRKGEKPSEALARAGVEYIEVRALDVNPFSPVGVEASQLRFLDVFLLYCLLSDSPKSDAVCESEITSNLRAVIHEGRKPGLALSRQGEPVTLKAWLLELFDEFDKLASLLDIDGSDYAEALAQWRMAVEDPALTLSGRVHAAVVEQGMNHGDFVMGLAAKYQDFFLSYPLSPGVEAGFQAEAASSLAAQAEIEASDEESFDEYLKGYFKGVPCALS.

Belongs to the glutamate--cysteine ligase type 1 family. Type 1 subfamily.

It carries out the reaction L-cysteine + L-glutamate + ATP = gamma-L-glutamyl-L-cysteine + ADP + phosphate + H(+). It functions in the pathway sulfur metabolism; glutathione biosynthesis; glutathione from L-cysteine and L-glutamate: step 1/2. The polypeptide is Glutamate--cysteine ligase (Shewanella amazonensis (strain ATCC BAA-1098 / SB2B)).